The primary structure comprises 417 residues: Serine hydroxymethyltransferase (417 aa).

(6S)-5,6,7,8-tetrahydrofolate contacts are provided by residues Leu121 and 125–127; that span reads GHL. Lys229 carries the post-translational modification N6-(pyridoxal phosphate)lysine. 355 to 357 lines the (6S)-5,6,7,8-tetrahydrofolate pocket; it reads SPF.

This sequence belongs to the SHMT family. Homodimer. Pyridoxal 5'-phosphate is required as a cofactor.

The protein localises to the cytoplasm. The catalysed reaction is (6R)-5,10-methylene-5,6,7,8-tetrahydrofolate + glycine + H2O = (6S)-5,6,7,8-tetrahydrofolate + L-serine. Its pathway is one-carbon metabolism; tetrahydrofolate interconversion. It functions in the pathway amino-acid biosynthesis; glycine biosynthesis; glycine from L-serine: step 1/1. Catalyzes the reversible interconversion of serine and glycine with tetrahydrofolate (THF) serving as the one-carbon carrier. This reaction serves as the major source of one-carbon groups required for the biosynthesis of purines, thymidylate, methionine, and other important biomolecules. Also exhibits THF-independent aldolase activity toward beta-hydroxyamino acids, producing glycine and aldehydes, via a retro-aldol mechanism. This is Serine hydroxymethyltransferase from Shewanella amazonensis (strain ATCC BAA-1098 / SB2B).